We begin with the raw amino-acid sequence, 174 residues long: Gamma-crystallin C (174 aa).

Beta/gamma crystallin 'Greek key' domains follow at residues glycine 2–serine 40 and glycine 41–proline 83. Cysteine 23 bears the S-methylcysteine mark. Positions glutamine 84–serine 87 are connecting peptide. Beta/gamma crystallin 'Greek key' domains lie at histidine 88–glutamate 128 and glycine 129–valine 171.

Belongs to the beta/gamma-crystallin family. Monomer.

Its function is as follows. Crystallins are the dominant structural components of the vertebrate eye lens. The polypeptide is Gamma-crystallin C (CRYGC) (Canis lupus familiaris (Dog)).